The primary structure comprises 246 residues: UL16-binding protein 2 (246 aa).

Residues 1-25 form the signal peptide; the sequence is MAAAAATKILLCLPLLLLLSGWSRA. The segment at 29-117 is MHC class I alpha-1 like; that stretch reads DPHSLCYDIT…IQLENYTPKE (89 aa). Cys-50 and Cys-66 are oxidised to a cystine. Residues Asn-68 and Asn-82 are each glycosylated (N-linked (GlcNAc...) asparagine). The segment at 118–210 is MHC class I alpha-2 like; that stretch reads PLTLQARMSC…MDSTLEPSAG (93 aa). A disulfide bridge connects residues Cys-127 and Cys-190. Ser-216 contributes to the a protein binding site. The GPI-anchor amidated serine moiety is linked to residue Ser-217. Residues 218–246 constitute a propeptide, removed in mature form; sequence GTTQLRATATTLILCCLLIILPCFILPGI.

This sequence belongs to the MHC class I family. Interacts with KLRK1/NKG2D. Does not bind to beta2-microglobulin. In terms of assembly, (Microbial infection) In CMV-infected cells, interacts with the viral glycoprotein UL16; this interaction causes ULBP2 retention in the endoplasmic reticulum and cis-Golgi and prevents binding to and activation of KLRK1/NKG2D, providing CMV with an immune evasion mechanism. As to expression, expressed in various types of cancer cell lines and in the fetus, but not in normal tissues.

It localises to the cell membrane. The protein localises to the endoplasmic reticulum. It is found in the secreted. Its function is as follows. Binds and activates the KLRK1/NKG2D receptor, mediating natural killer cell cytotoxicity. The polypeptide is UL16-binding protein 2 (Homo sapiens (Human)).